Here is a 499-residue protein sequence, read N- to C-terminus: Probable lipid II flippase MurJ (499 aa).

Helical transmembrane passes span leucine 4–valine 24, aspartate 26–phenylalanine 46, leucine 88–isoleucine 108, phenylalanine 130–valine 150, phenylalanine 154–isoleucine 174, leucine 184–phenylalanine 204, phenylalanine 227–leucine 247, isoleucine 265–valine 285, threonine 297–serine 317, leucine 335–glutamine 355, alanine 375–phenylalanine 395, glycine 396–tyrosine 416, isoleucine 425–tyrosine 445, and phenylalanine 455–leucine 475.

This sequence belongs to the MurJ/MviN family.

It is found in the cell inner membrane. It participates in cell wall biogenesis; peptidoglycan biosynthesis. Involved in peptidoglycan biosynthesis. Transports lipid-linked peptidoglycan precursors from the inner to the outer leaflet of the cytoplasmic membrane. The protein is Probable lipid II flippase MurJ of Aquifex aeolicus (strain VF5).